The sequence spans 448 residues: Glucose-6-phosphate isomerase (448 aa).

Glutamate 291 serves as the catalytic Proton donor. Residues histidine 312 and lysine 425 contribute to the active site.

It belongs to the GPI family.

It localises to the cytoplasm. It catalyses the reaction alpha-D-glucose 6-phosphate = beta-D-fructose 6-phosphate. The protein operates within carbohydrate biosynthesis; gluconeogenesis. It participates in carbohydrate degradation; glycolysis; D-glyceraldehyde 3-phosphate and glycerone phosphate from D-glucose: step 2/4. Its function is as follows. Catalyzes the reversible isomerization of glucose-6-phosphate to fructose-6-phosphate. This chain is Glucose-6-phosphate isomerase, found in Symbiobacterium thermophilum (strain DSM 24528 / JCM 14929 / IAM 14863 / T).